The sequence spans 182 residues: ATP-dependent protease subunit HslV (182 aa).

The active site involves Thr12. Na(+)-binding residues include Ala167, Cys170, and Thr173.

The protein belongs to the peptidase T1B family. HslV subfamily. A double ring-shaped homohexamer of HslV is capped on each side by a ring-shaped HslU homohexamer. The assembly of the HslU/HslV complex is dependent on binding of ATP.

It localises to the cytoplasm. The catalysed reaction is ATP-dependent cleavage of peptide bonds with broad specificity.. With respect to regulation, allosterically activated by HslU binding. In terms of biological role, protease subunit of a proteasome-like degradation complex believed to be a general protein degrading machinery. The protein is ATP-dependent protease subunit HslV of Prosthecochloris aestuarii (strain DSM 271 / SK 413).